The sequence spans 120 residues: uncharacterized protein (120 aa).

This is an uncharacterized protein from Saccharomyces cerevisiae (strain ATCC 204508 / S288c) (Baker's yeast).